Here is a 504-residue protein sequence, read N- to C-terminus: Galactose/methyl galactoside import ATP-binding protein MglA (504 aa).

ABC transporter domains lie at 8–247 and 258–504; these read LEMN…VGRD and TPGE…TRFI. Residue 40–47 coordinates ATP; the sequence is GENGAGKS.

This sequence belongs to the ABC transporter superfamily. Galactose/methyl galactoside importer (TC 3.A.1.2.3) family. The complex is composed of one ATP-binding protein (MglA), two transmembrane proteins (MglC) and a solute-binding protein (MglB).

The protein localises to the cell membrane. The catalysed reaction is D-galactose(out) + ATP + H2O = D-galactose(in) + ADP + phosphate + H(+). It catalyses the reaction methyl beta-D-galactoside(out) + ATP + H2O = methyl beta-D-galactoside(in) + ADP + phosphate + H(+). Part of the ABC transporter complex MglABC involved in galactose/methyl galactoside import. Responsible for energy coupling to the transport system. This Clostridium tetani (strain Massachusetts / E88) protein is Galactose/methyl galactoside import ATP-binding protein MglA.